The primary structure comprises 353 residues: Outer membrane protein P5 (353 aa).

Positions 1-21 (MKKTAIALVVAGLAAASVAQA) are cleaved as a signal peptide. The next 8 membrane-spanning stretches (beta stranded) occupy residues 27 to 37 (TFYAGVKAGQA), 58 to 69 (SFTYGVFGGYQI), 77 to 85 (LAVELGYDD), 104 to 115 (HGTHLSLKGSYE), 120 to 128 (LDVYGKAGV), 158 to 167 (GLFAVGAEYA), 172 to 179 (LAVRLEYQ), and 205 to 213 (SINAGISYR). Residues 227–353 (VVSKTFSLNS…RVEIAVNGTK (127 aa)) form the OmpA-like domain. The cysteines at positions 326 and 338 are disulfide-linked.

This sequence belongs to the outer membrane OOP (TC 1.B.6) superfamily. OmpA family. In terms of assembly, monomer and homodimer.

It is found in the cell outer membrane. With TolR probably plays a role in maintaining the position of the peptidoglycan cell wall in the periplasm. Acts as a porin with low permeability that allows slow penetration of small solutes; an internal gate slows down solute passage. Functionally, reconstitution in planar bilayers with lithium dodecyl sulfate-solublized P5 yields narrow pores (58 pS conductance) with a low probability of opening, whereas n-octyl-bD-glucopyranoside-solubilized P5 forms large pores (1.1 nS conductance) with high open probability. The large pore easily converts to the smaller pore at room temperature; at 42 degrees Celsius the smaller pore converts to the larger one. The sequence is that of Outer membrane protein P5 from Haemophilus influenzae (strain ATCC 51907 / DSM 11121 / KW20 / Rd).